Reading from the N-terminus, the 56-residue chain is UPF0434 protein CbuK_1382 (56 aa).

It belongs to the UPF0434 family.

This is UPF0434 protein CbuK_1382 from Coxiella burnetii (strain CbuK_Q154) (Coxiella burnetii (strain Q154)).